We begin with the raw amino-acid sequence, 695 residues long: Protein ACTIVITY OF BC1 COMPLEX KINASE 7, chloroplastic (695 aa).

Residues 259–589 (EFEEQPIAAA…VQEIRKQADD (331 aa)) form the Protein kinase domain. ATP is bound by residues 265 to 273 (IAAASLGQV) and Lys-287. Asp-421 (proton acceptor) is an active-site residue. 2 helical membrane-spanning segments follow: residues 633–653 (TILQ…NIGV) and 659–679 (GSQL…LLVL).

The protein belongs to the protein kinase superfamily. ADCK protein kinase family. As to expression, mostly expressed in leaves and flowers, and, to a lower extent, in roots.

Its subcellular location is the plastid. The protein resides in the chloroplast thylakoid membrane. The protein localises to the chloroplast. It is found in the plastoglobule. The catalysed reaction is L-seryl-[protein] + ATP = O-phospho-L-seryl-[protein] + ADP + H(+). The enzyme catalyses L-threonyl-[protein] + ATP = O-phospho-L-threonyl-[protein] + ADP + H(+). In terms of biological role, involved in resistance to oxidative stress. Influences responses to reactive oxygen species (ROS) production. Regulates plastoglobules formation in thylakoids. Together with OSA1, regulates iron distribution within the chloroplast and mediates the oxidative stress response. Together with ABC1K8, influences chloroplast lipid synthesis/accumulation and modulates chloroplast membrane composition in response to stress. This chain is Protein ACTIVITY OF BC1 COMPLEX KINASE 7, chloroplastic, found in Arabidopsis thaliana (Mouse-ear cress).